The sequence spans 397 residues: Lysophospholipid transporter LplT (397 aa).

Over 1–17 (MSESVHTNTSLWSKGMK) the chain is Periplasmic. A helical membrane pass occupies residues 18–38 (AVIVAQFLSAFGDNALLFATL). Residues 39-52 (ALLKAQFYPEWSQP) are Cytoplasmic-facing. Residues 53-73 (ILQMVFVGAYILFAPFVGQVA) form a helical membrane-spanning segment. Residues 74–90 (DSFAKGRVMMFANGLKL) lie on the Periplasmic side of the membrane. A helical membrane pass occupies residues 91–111 (LGAASICFGINPFLGYTLVGV). Residues 112-144 (GAAAYSPAKYGILGELTTGSKLVKANGLMEAST) lie on the Cytoplasmic side of the membrane. Residues 145–165 (IAAILLGSVAGGVLADWHVLV) traverse the membrane as a helical segment. Ala-166 is a topological domain (periplasmic). The chain crosses the membrane as a helical span at residues 167–187 (LAACALAYGGAVVANIYIPKL). Residues 188–226 (AAARPGQSWNLINMTRSFLNACTSLWRNGETRFSLVGTS) are Cytoplasmic-facing. Residues 227–247 (LFWGAGVTLRFLLVLWVPVAL) form a helical membrane-spanning segment. Over 248–256 (GITDNATPT) the chain is Periplasmic. Residues 257–277 (YLNAMVAIGIVVGAGAAAKLV) traverse the membrane as a helical segment. The Cytoplasmic segment spans residues 278 to 280 (TLE). The helical transmembrane segment at 281 to 301 (TMSRCMPAGILIGVVVLIFSL) threads the bilayer. Residues 302–304 (QHE) are Periplasmic-facing. A helical membrane pass occupies residues 305-325 (LLPAYALLMLIGVMGGFFVVP). The Cytoplasmic segment spans residues 326–343 (LNALLQERGKKSVGAGNA). A helical transmembrane segment spans residues 344–364 (IAVQNLGENSAMLLMLGIYSL). Residues 365 to 366 (AV) lie on the Periplasmic side of the membrane. The helical transmembrane segment at 367–387 (MVGIPVVPIGIGFGALFALAI) threads the bilayer. Over 388 to 397 (TALWIWQRRH) the chain is Cytoplasmic.

It belongs to the major facilitator superfamily. LplT (TC 2.A.1.42) family.

It is found in the cell inner membrane. Functionally, catalyzes the facilitated diffusion of 2-acyl-glycero-3-phosphoethanolamine (2-acyl-GPE) into the cell. The polypeptide is Lysophospholipid transporter LplT (Shigella sonnei (strain Ss046)).